The sequence spans 303 residues: Aspartate carbamoyltransferase catalytic subunit (303 aa).

Positions 51 and 52 each coordinate carbamoyl phosphate. Lysine 80 contacts L-aspartate. Arginine 101, histidine 129, and glutamine 132 together coordinate carbamoyl phosphate. 2 residues coordinate L-aspartate: arginine 162 and arginine 221. Residues leucine 260 and proline 261 each contribute to the carbamoyl phosphate site.

The protein belongs to the aspartate/ornithine carbamoyltransferase superfamily. ATCase family. Heterooligomer of catalytic and regulatory chains.

It catalyses the reaction carbamoyl phosphate + L-aspartate = N-carbamoyl-L-aspartate + phosphate + H(+). It participates in pyrimidine metabolism; UMP biosynthesis via de novo pathway; (S)-dihydroorotate from bicarbonate: step 2/3. In terms of biological role, catalyzes the condensation of carbamoyl phosphate and aspartate to form carbamoyl aspartate and inorganic phosphate, the committed step in the de novo pyrimidine nucleotide biosynthesis pathway. The chain is Aspartate carbamoyltransferase catalytic subunit from Saccharolobus islandicus (strain M.14.25 / Kamchatka #1) (Sulfolobus islandicus).